A 100-amino-acid polypeptide reads, in one-letter code: DNA-binding protein HU (100 aa).

It belongs to the bacterial histone-like protein family.

In terms of biological role, histone-like DNA-binding protein which is capable of wrapping DNA to stabilize it, and thus to prevent its denaturation under extreme environmental conditions. This chain is DNA-binding protein HU (hup), found in Synechocystis sp. (strain ATCC 27184 / PCC 6803 / Kazusa).